The primary structure comprises 137 residues: MIIGIGNDLCNIERIQRSLDRFGERFEQRVFTPHEIAKARGRRRVAETYAKRFAAKEAMAKALGTGVPRAGVHWKHLGVINLPSGKPGFELTGGAAARLAKLTPPGHRAVVHLTLTDDHPWAEAQVIIEAIPVAEPS.

Positions 8 and 57 each coordinate Mg(2+).

Belongs to the P-Pant transferase superfamily. AcpS family. It depends on Mg(2+) as a cofactor.

It is found in the cytoplasm. The catalysed reaction is apo-[ACP] + CoA = holo-[ACP] + adenosine 3',5'-bisphosphate + H(+). Functionally, transfers the 4'-phosphopantetheine moiety from coenzyme A to a Ser of acyl-carrier-protein. This chain is Holo-[acyl-carrier-protein] synthase, found in Hyphomonas neptunium (strain ATCC 15444).